We begin with the raw amino-acid sequence, 270 residues long: Putative pyruvate, phosphate dikinase regulatory protein 1 (270 aa).

151–158 (GVSRTSKT) is a binding site for ADP.

Belongs to the pyruvate, phosphate/water dikinase regulatory protein family. PDRP subfamily.

The catalysed reaction is N(tele)-phospho-L-histidyl/L-threonyl-[pyruvate, phosphate dikinase] + ADP = N(tele)-phospho-L-histidyl/O-phospho-L-threonyl-[pyruvate, phosphate dikinase] + AMP + H(+). It catalyses the reaction N(tele)-phospho-L-histidyl/O-phospho-L-threonyl-[pyruvate, phosphate dikinase] + phosphate + H(+) = N(tele)-phospho-L-histidyl/L-threonyl-[pyruvate, phosphate dikinase] + diphosphate. Bifunctional serine/threonine kinase and phosphorylase involved in the regulation of the pyruvate, phosphate dikinase (PPDK) by catalyzing its phosphorylation/dephosphorylation. This Enterococcus faecalis (strain ATCC 700802 / V583) protein is Putative pyruvate, phosphate dikinase regulatory protein 1.